The primary structure comprises 216 residues: UPF0502 protein Pmen_2627 (216 aa).

It belongs to the UPF0502 family.

This is UPF0502 protein Pmen_2627 from Ectopseudomonas mendocina (strain ymp) (Pseudomonas mendocina).